Consider the following 127-residue polypeptide: MAKPTRKRRVKKDIESGVAHIHATFNNTIVMITDVHGNALAWSSAGALGFKGSRKSTPFAAQMAAEAAAKSAQEHGLKTVEVTVKGPGSGRESAIRALAAAGLEVTAIRDVTPVPHNGARPPKRRRV.

It belongs to the universal ribosomal protein uS11 family. Part of the 30S ribosomal subunit. Interacts with proteins S7 and S18. Binds to IF-3.

In terms of biological role, located on the platform of the 30S subunit, it bridges several disparate RNA helices of the 16S rRNA. Forms part of the Shine-Dalgarno cleft in the 70S ribosome. This chain is Small ribosomal subunit protein uS11, found in Streptococcus pyogenes serotype M1.